The following is a 71-amino-acid chain: Virion membrane protein A13 homolog (71 aa).

A helical membrane pass occupies residues 1–21 (MGIIDTFVITAVTVIIFCLLI). Residues 22–70 (YAAYKRYKCIPSPDDRDKVLKSTLNDDTLFNQTLTPDQVKALHRLVTSS) lie on the Virion surface side of the membrane.

Belongs to the chordopoxvirinae A13 family.

It is found in the virion membrane. Essential for the encapsidation of DNA into immature virions (IV) and the subsequent maturation of IV into mature virions (MV). The sequence is that of Virion membrane protein A13 homolog from Vertebrata (FPV).